The primary structure comprises 304 residues: HPr kinase/phosphorylase (304 aa).

Residues H136 and K157 contribute to the active site. 151-158 contributes to the ATP binding site; sequence GESGIGKS. S158 contacts Mg(2+). The Proton acceptor; for phosphorylation activity. Proton donor; for dephosphorylation activity role is filled by D175. The important for the catalytic mechanism of both phosphorylation and dephosphorylation stretch occupies residues 198–207; it reads LEVRGIGIID. E199 contacts Mg(2+). Residue R240 is part of the active site. The segment at 261–266 is important for the catalytic mechanism of dephosphorylation; it reads PVRPGR.

The protein belongs to the HPrK/P family. As to quaternary structure, homohexamer. Mg(2+) is required as a cofactor.

It catalyses the reaction [HPr protein]-L-serine + ATP = [HPr protein]-O-phospho-L-serine + ADP + H(+). It carries out the reaction [HPr protein]-O-phospho-L-serine + phosphate + H(+) = [HPr protein]-L-serine + diphosphate. Its function is as follows. Catalyzes the ATP- as well as the pyrophosphate-dependent phosphorylation of a specific serine residue in HPr, a phosphocarrier protein of the phosphoenolpyruvate-dependent sugar phosphotransferase system (PTS). HprK/P also catalyzes the pyrophosphate-producing, inorganic phosphate-dependent dephosphorylation (phosphorolysis) of seryl-phosphorylated HPr (P-Ser-HPr). The two antagonistic activities of HprK/P are regulated by several intracellular metabolites, which change their concentration in response to the absence or presence of rapidly metabolisable carbon sources (glucose, fructose, etc.) in the growth medium. Therefore, by controlling the phosphorylation state of HPr, HPrK/P is a sensor enzyme that plays a major role in the regulation of carbon metabolism and sugar transport: it mediates carbon catabolite repression (CCR), and regulates PTS-catalyzed carbohydrate uptake and inducer exclusion. In Clostridium botulinum (strain Eklund 17B / Type B), this protein is HPr kinase/phosphorylase.